Consider the following 272-residue polypeptide: 5'-nucleotidase SurE (272 aa).

Positions 28, 29, 59, and 115 each coordinate a divalent metal cation.

It belongs to the SurE nucleotidase family. Requires a divalent metal cation as cofactor.

It localises to the cytoplasm. The catalysed reaction is a ribonucleoside 5'-phosphate + H2O = a ribonucleoside + phosphate. Nucleotidase that shows phosphatase activity on nucleoside 5'-monophosphates. The protein is 5'-nucleotidase SurE of Chlorobium chlorochromatii (strain CaD3).